Reading from the N-terminus, the 91-residue chain is uncharacterized protein (91 aa).

The first 20 residues, 1 to 20, serve as a signal peptide directing secretion; it reads MFSRVLALLAVLLLSANTWA.

The protein belongs to the BhsA/McbA family.

It localises to the periplasm. This is an uncharacterized protein from Escherichia coli O157:H7.